Consider the following 321-residue polypeptide: NADH-ubiquinone oxidoreductase chain 1 (321 aa).

8 helical membrane passes run 7-27 (ITNS…LTLM), 73-93 (ILLI…WTPI), 104-124 (LGLL…LWAG), 148-168 (VTLG…TMQL), 175-195 (HTWL…STLA), 227-247 (FFLA…ILFI), 256-276 (ELFL…FLWI), and 297-317 (LPLT…ISGI).

Belongs to the complex I subunit 1 family.

The protein localises to the mitochondrion inner membrane. The enzyme catalyses a ubiquinone + NADH + 5 H(+)(in) = a ubiquinol + NAD(+) + 4 H(+)(out). Core subunit of the mitochondrial membrane respiratory chain NADH dehydrogenase (Complex I) that is believed to belong to the minimal assembly required for catalysis. Complex I functions in the transfer of electrons from NADH to the respiratory chain. The immediate electron acceptor for the enzyme is believed to be ubiquinone. This Varanus dumerilii (Dumeril's monitor) protein is NADH-ubiquinone oxidoreductase chain 1 (MT-ND1).